A 140-amino-acid chain; its full sequence is Protein SNA4 (140 aa).

Residues 1–8 lie on the Cytoplasmic side of the membrane; it reads MCCYCVCC. S-palmitoyl cysteine attachment occurs at residues Cys-2, Cys-3, Cys-5, Cys-7, and Cys-8. The chain crosses the membrane as a helical span at residues 9-29; sequence TVSDFILYIVAFFFPPAAVLL. Residues 30–41 lie on the Vacuolar side of the membrane; that stretch reads RSGPCSSDFLLN. A helical membrane pass occupies residues 42–62; it reads VLLTLLGFLPGMLHAFYYITI. Over 63–140 the chain is Cytoplasmic; the sequence is TSPLRNAEYV…LVESPPPYVP (78 aa). Residues 84–140 are disordered; sequence RNVPSNRPQNSQTPQNRPQQGSSARNVYPSVETPLLQGAAPHDNKQSLVESPPPYVP. The span at 85–108 shows a compositional bias: polar residues; the sequence is NVPSNRPQNSQTPQNRPQQGSSAR. Lys-128 participates in a covalent cross-link: Glycyl lysine isopeptide (Lys-Gly) (interchain with G-Cter in ubiquitin). Phosphoserine is present on Ser-134.

Belongs to the UPF0057 (PMP3) family.

Its subcellular location is the vacuole membrane. The chain is Protein SNA4 (SNA4) from Saccharomyces cerevisiae (strain ATCC 204508 / S288c) (Baker's yeast).